The sequence spans 402 residues: Apolipoprotein L3 (402 aa).

This sequence belongs to the apolipoprotein L family. In terms of tissue distribution, widely expressed; the highest levels are in prostate, lung and placenta; also detected in kidney, bone marrow, spleen, thymus, spinal cord, adrenal gland, salivary gland, trachea and mammary gland; levels are low in brain, heart, fetal liver, pancreas and testis.

The protein resides in the cytoplasm. Functionally, may affect the movement of lipids in the cytoplasm or allow the binding of lipids to organelles. The protein is Apolipoprotein L3 (APOL3) of Homo sapiens (Human).